The sequence spans 209 residues: Putative 3-methyladenine DNA glycosylase (209 aa).

Residues 189–209 (YISKTQPGPPPKKRKKGLESS) are disordered. Positions 199–209 (PKKRKKGLESS) are enriched in basic residues.

This sequence belongs to the DNA glycosylase MPG family.

The protein is Putative 3-methyladenine DNA glycosylase of Chlorobaculum tepidum (strain ATCC 49652 / DSM 12025 / NBRC 103806 / TLS) (Chlorobium tepidum).